Consider the following 30-residue polypeptide: Trypsin inhibitor 1 (30 aa).

Intrachain disulfides connect cysteine 4-cysteine 21, cysteine 11-cysteine 23, and cysteine 17-cysteine 29.

This sequence belongs to the protease inhibitor I7 (squash-type serine protease inhibitor) family.

The protein resides in the secreted. Inhibits trypsin. In Momordica charantia (Bitter gourd), this protein is Trypsin inhibitor 1.